Here is a 419-residue protein sequence, read N- to C-terminus: Tol-Pal system protein TolB (419 aa).

The first 17 residues, 1–17, serve as a signal peptide directing secretion; the sequence is MRFIGLVLLLLSVKLFG.

Belongs to the TolB family. The Tol-Pal system is composed of five core proteins: the inner membrane proteins TolA, TolQ and TolR, the periplasmic protein TolB and the outer membrane protein Pal. They form a network linking the inner and outer membranes and the peptidoglycan layer.

The protein localises to the periplasm. Its function is as follows. Part of the Tol-Pal system, which plays a role in outer membrane invagination during cell division and is important for maintaining outer membrane integrity. The sequence is that of Tol-Pal system protein TolB from Helicobacter hepaticus (strain ATCC 51449 / 3B1).